Consider the following 195-residue polypeptide: Interferon tau (195 aa).

An N-terminal signal peptide occupies residues 1–23 (MAFMLSLLMALVLVSYGLGGSLG). 2 disulfides stabilise this stretch: Cys52-Cys162 and Cys87-Cys109.

It belongs to the alpha/beta interferon family. IFN-alphaII subfamily.

It is found in the secreted. Functionally, paracrine hormone primarily responsible for maternal recognition of pregnancy. Interacts with endometrial receptors, probably type I interferon receptors, and blocks estrogen receptor expression, preventing the estrogen-induced increase in oxytocin receptor expression in the endometrium. This results in the suppression of the pulsatile endometrial release of the luteolytic hormone prostaglandin F2-alpha, hindering the regression of the corpus luteum (luteolysis) and therefore a return to ovarian cyclicity. This, and a possible direct effect of IFN-tau on prostaglandin synthesis, leads in turn to continued ovarian progesterone secretion, which stimulates the secretion by the endometrium of the nutrients required for the growth of the conceptus. In summary, displays particularly high antiviral and antiproliferative potency concurrently with particular weak cytotoxicity, high antiluteolytic activity and immunomodulatory properties. In contrast with other IFNs, IFN-tau is not virally inducible. This is Interferon tau (IFNT) from Giraffa camelopardalis (Giraffe).